We begin with the raw amino-acid sequence, 560 residues long: Bifunctional NAD(P)H-hydrate repair enzyme (560 aa).

The tract at residues 1–241 (MLSRLSERCS…WMTAPERMRA (241 aa)) is NAD(P)H-hydrate epimerase. Positions 29 to 235 (LRDAEPAAAA…SLGLEDWMTA (207 aa)) constitute a YjeF N-terminal domain. The segment at 77–81 (NNGGD) is NADPHX 1; for epimerase activity. Residues Asn-78 and Asp-145 each coordinate K(+). The segment at 149-155 (GTGICGP) is NADPHX 1; for epimerase activity. Positions 160 and 178 each coordinate (6S)-NADPHX. Ser-181 is a binding site for K(+). The YjeF C-terminal domain occupies 249–547 (LDDVYEYFGI…HRVPLIVNAS (299 aa)). The ADP-dependent (S)-NAD(P)H-hydrate dehydratase stretch occupies residues 249–560 (LDDVYEYFGI…PATRQRSSGP (312 aa)). Gly-351 is a (6S)-NADPHX binding site. The segment at 417 to 423 (HPGEAAR) is NADPHX 2; for dehydratase activity. Residues 454–458 (KGPGT) and 475–484 (NAGMASGGMG) each bind ADP. (6S)-NADPHX is bound at residue Asp-485.

In the N-terminal section; belongs to the NnrE/AIBP family. This sequence in the C-terminal section; belongs to the NnrD/CARKD family. K(+) is required as a cofactor.

The catalysed reaction is (6S)-NADHX + ADP = AMP + phosphate + NADH + H(+). The enzyme catalyses (6S)-NADPHX + ADP = AMP + phosphate + NADPH + H(+). It carries out the reaction (6R)-NADHX = (6S)-NADHX. It catalyses the reaction (6R)-NADPHX = (6S)-NADPHX. In terms of biological role, bifunctional enzyme that catalyzes the epimerization of the S- and R-forms of NAD(P)HX and the dehydration of the S-form of NAD(P)HX at the expense of ADP, which is converted to AMP. This allows the repair of both epimers of NAD(P)HX, a damaged form of NAD(P)H that is a result of enzymatic or heat-dependent hydration. In Leishmania infantum, this protein is Bifunctional NAD(P)H-hydrate repair enzyme.